Reading from the N-terminus, the 2299-residue chain is Acetyl-CoA carboxylase dmxL1 (2299 aa).

Residues Thr-21 to His-39 show a composition bias toward low complexity. The interval Thr-21 to Ala-41 is disordered. The Biotin carboxylation domain occupies Val-75–Thr-583. In terms of domain architecture, ATP-grasp 1 spans Gln-227–Met-424. Residue Ala-258–Leu-315 coordinates ATP. Residues Glu-381, Glu-395, and Asn-397 each contribute to the Mg(2+) site. 3 residues coordinate Mn(2+): Glu-381, Glu-395, and Asn-397. A Biotinyl-binding domain is found at Leu-710 to Thr-784. Lys-751 carries the N6-biotinyllysine modification. The disordered stretch occupies residues Asp-1159–Arg-1208. Residues Pro-1539–Pro-1887 enclose the CoA carboxyltransferase N-terminal domain. Residues Pro-1891–Thr-2205 form the CoA carboxyltransferase C-terminal domain.

The cofactor is biotin. Requires Mg(2+) as cofactor. It depends on Mn(2+) as a cofactor.

It carries out the reaction hydrogencarbonate + acetyl-CoA + ATP = malonyl-CoA + ADP + phosphate + H(+). The catalysed reaction is N(6)-biotinyl-L-lysyl-[protein] + hydrogencarbonate + ATP = N(6)-carboxybiotinyl-L-lysyl-[protein] + ADP + phosphate + H(+). The protein operates within secondary metabolite biosynthesis. Its pathway is lipid metabolism; malonyl-CoA biosynthesis; malonyl-CoA from acetyl-CoA: step 1/1. Functionally, acetyl-CoA carboxylase; part of the gene cluster that mediates the biosynthesis of the dimeric xanthones cryptosporioptides. The pathway begins with the synthesis of atrochrysone thioester by the polyketide synthase dmx-nrPKS. The atrochrysone carboxyl ACP thioesterase dmxR1 then breaks the thioester bond and releases the atrochrysone carboxylic acid from dmx-nrPKS. Atrochrysone carboxylic acid is decarboxylated by the decarboxylase dmxR15, and oxidized by the anthrone oxygenase dmxR16 to yield emodin. Emodin is then reduced to emodin hydroquinone by the oxidoreductase dmxR7. A-ring reduction by the short chain dehydrogenase dmxR18, dehydration by the scytalone dehydratase-like protein dmxR17 and probable spontaneous re-oxidation, results in overall deoxygenation to chrysophanol. Baeyer-Villiger oxidation by the Baeyer-Villiger monooxygenase (BVMO) dmxR6 then yields monodictylactone in equilibrium with monodictyphenone. In the case of the cryptosporioptides biosynthesis, monodictylactone is reduced at C-12 to an alcohol (by the short chain dehydrogenases dmxR12 or dmxR8) and hydroxylated at C-5 by dmxR9, yielding the electron-rich aromatic which could eliminate H(2)O to form the ortho-quinonemethide, followed by tautomerisation to paraquinone and complete the formal reduction to produce the 10-methylgroup. Conjugate addition of C-4a-OH to the resulting paraquinone by the monooxygenase dmxR10 then gives cyclohexadienone, which is then reduced at C-5 by the short chain dehydrogenase dmxR3 to give the dihydroxanthone. The 6,7-epoxide in the cryptosporioptides could be introduced by the cytochrome P450 monooxygenase dmxL3. The highly reducing PKS dmxL2 manufactures butyrate, which is further carboxylated by dmxL1 to form ethylmalonate. It is not yet clear whether the carboxylation occurs while the butyrate is attached to the ACP of dmxL2, but this unusual fungal metabolite could then be esterified to O-5 by the O-acetyltransferase dmxR13. Finally, dimerization performed by dmxR5 gives the observed dimers cryptosporioptides A, B and C as the final products of the pathway. The chain is Acetyl-CoA carboxylase dmxL1 from Cryptosporiopsis sp. (strain 8999).